Here is a 311-residue protein sequence, read N- to C-terminus: Olfactory receptor 10G7 (311 aa).

Residues 1–23 (MSNATLLTAFILTGLPHAPGLDA) lie on the Extracellular side of the membrane. Asn-3 carries N-linked (GlcNAc...) asparagine glycosylation. The chain crosses the membrane as a helical span at residues 24–44 (PLFGIFLVVYVLTVLGNLLIL). Residues 45 to 52 (LVIRVDSH) are Cytoplasmic-facing. Residues 53–73 (LHTPMYYFLTNLSFIDMWFST) form a helical membrane-spanning segment. The Extracellular segment spans residues 74–98 (VTVPKMLMTLVSPSGRTISFHSCVA). Cys-96 and Cys-188 form a disulfide bridge. Residues 99-119 (QLYFFHFLGSTECFLYTVMSY) form a helical membrane-spanning segment. Residues 120-138 (DRYLAISYPLRYTNMMTGR) are Cytoplasmic-facing. The chain crosses the membrane as a helical span at residues 139-159 (SCALLATGTWLSGSLHSAVQT). Over 160 to 196 (ILTFHLPYCGPNQIQHYFCDAPPILKLACADTSANEM) the chain is Extracellular. The helical transmembrane segment at 197-216 (VIFVNIGLVASGCFVLIVLS) threads the bilayer. Residues 217–236 (YVSIVCSILRIRTSEGRHRA) are Cytoplasmic-facing. A helical membrane pass occupies residues 237 to 257 (FQTCASHCIVVLCFFGPGLFI). The Extracellular portion of the chain corresponds to 258–268 (YLRPGSRDALH). Residues 269–289 (GVVAVFYTTLTPLFNPVVYTL) form a helical membrane-spanning segment. The Cytoplasmic segment spans residues 290–311 (RNKEVKKALLKLKNGSVFAQGE).

This sequence belongs to the G-protein coupled receptor 1 family.

The protein resides in the cell membrane. Its function is as follows. Odorant receptor. The sequence is that of Olfactory receptor 10G7 (OR10G7) from Homo sapiens (Human).